A 679-amino-acid polypeptide reads, in one-letter code: Enzymatic polyprotein (679 aa).

The tract at residues 40–130 is protease; sequence LHCFVDTGAS…LYEPFIQFTD (91 aa). Asp-45 is an active-site residue. Residues 272–452 form the Reverse transcriptase domain; that stretch reads LKVIKPSKSP…KKINFLGLEI (181 aa).

The protein belongs to the caulimoviridae enzymatic polyprotein family.

It carries out the reaction DNA(n) + a 2'-deoxyribonucleoside 5'-triphosphate = DNA(n+1) + diphosphate. Encodes for at least two polypeptides: protease (PR) and reverse transcriptase (RT). The protease processes the polyprotein in cis. Reverse transcriptase is multifunctional enzyme that converts the viral RNA genome into dsDNA in viral cytoplasmic capsids. This enzyme displays a DNA polymerase activity that can copy either DNA or RNA templates, and a ribonuclease H (RNase H) activity that cleaves the RNA strand of RNA-DNA heteroduplexes in a partially processive 3'- to 5'-endonucleasic mode. Neo-synthesized pregenomic RNA (pgRNA) are encapsidated, and reverse-transcribed inside the nucleocapsid. Partial (+)DNA is synthesized from the (-)DNA template and generates the relaxed circular DNA (RC-DNA) genome. After budding and infection, the RC-DNA migrates in the nucleus, and is converted into a plasmid-like covalently closed circular DNA (cccDNA). The sequence is that of Enzymatic polyprotein from Arabidopsis thaliana (Mouse-ear cress).